Reading from the N-terminus, the 153-residue chain is Transcriptional repressor NrdR (153 aa).

Residues 3–34 (CPFCGHLEDRVIDSRAGGAGEVIRRRRECASC) fold into a zinc finger. Residues 49-139 (PTVVKKDGRR…VYRSFRDIDQ (91 aa)) form the ATP-cone domain.

It belongs to the NrdR family. Requires Zn(2+) as cofactor.

Its function is as follows. Negatively regulates transcription of bacterial ribonucleotide reductase nrd genes and operons by binding to NrdR-boxes. The chain is Transcriptional repressor NrdR from Sorangium cellulosum (strain So ce56) (Polyangium cellulosum (strain So ce56)).